The primary structure comprises 310 residues: Flavin-dependent trigonelline monooxygenase, reductase component (310 aa).

FMN is bound by residues 40–43, 57–63, 90–91, and R97; these read TANS, SIAKTSS, and FA.

This sequence belongs to the non-flavoprotein flavin reductase family. Homodimer. The trigonelline monooxygenase is composed of a reductase component TgnA and an oxygenase component TgnB.

The enzyme catalyses a reduced flavin + NAD(+) = an oxidized flavin + NADH + 2 H(+). It carries out the reaction FADH2 + NAD(+) = FAD + NADH + 2 H(+). The catalysed reaction is FMNH2 + NAD(+) = FMN + NADH + 2 H(+). With respect to regulation, maximal reductase activity is achieved only upon trigonelline (TG) binding to the reductase component before interaction with NADH. It seems that TgnA undergoes an allosteric transition upon trigonelline (TG) binding accounting for the positive cooperativity toward NADH oxidation. Involved in the degradation of the pyridine ring of trigonelline (TG; N-methylnicotinate) into succinate and methylamine as carbon and nitrogen sources, respectively. TgnA catalyzes the reduction of flavin (FMN or FAD) by NADH and supplies the reduced flavin to the oxygenase component TgnB. In Acinetobacter baylyi (strain ATCC 33305 / BD413 / ADP1), this protein is Flavin-dependent trigonelline monooxygenase, reductase component.